Here is a 153-residue protein sequence, read N- to C-terminus: Endoribonuclease YbeY (153 aa).

Histidine 116, histidine 120, and histidine 126 together coordinate Zn(2+).

Belongs to the endoribonuclease YbeY family. Requires Zn(2+) as cofactor.

It is found in the cytoplasm. Its function is as follows. Single strand-specific metallo-endoribonuclease involved in late-stage 70S ribosome quality control and in maturation of the 3' terminus of the 16S rRNA. This Clavibacter michiganensis subsp. michiganensis (strain NCPPB 382) protein is Endoribonuclease YbeY.